A 243-amino-acid chain; its full sequence is Small ribosomal subunit protein uS5 (243 aa).

A disordered region spans residues 1-54 (MSDNEKETQVAEETQNTQATAESSNNDERRGRRNNRGGEGRRGDRRGRREDNHE). Residues 11–24 (AEETQNTQATAESS) are compositionally biased toward polar residues. Basic and acidic residues predominate over residues 26–54 (NDERRGRRNNRGGEGRRGDRRGRREDNHE). In terms of domain architecture, S5 DRBM spans 57–120 (MLDRVVTINR…LDAKKHLFNV (64 aa)).

This sequence belongs to the universal ribosomal protein uS5 family. As to quaternary structure, part of the 30S ribosomal subunit. Contacts proteins S4 and S8.

With S4 and S12 plays an important role in translational accuracy. Its function is as follows. Located at the back of the 30S subunit body where it stabilizes the conformation of the head with respect to the body. This is Small ribosomal subunit protein uS5 from Bifidobacterium animalis subsp. lactis (strain AD011).